Consider the following 407-residue polypeptide: MQLLNLSLFFLLPFATANPIPQDSQNIIPGQYIVTLKDGLTTAEIDAHKTWLAFTHRSNIAAKGHSGIESEGVFKHFQIHKLNMYAAGLDKKTVEELRRSPHVKSVLPDQKIYLAEAVTQSNAGWNLGYMSSKGQPSPSWSTLTNYTYDSTAGEGVWAYVLDTGVNVNHVEFEGRAILGRNSIPNRPHEDTFGHGTYVGGIIAGKTYGVAKKATVVSAKAFDGGSSSYRYILDSYEWIVKNITDSDRKSKSVINLSISGAKYQPFDEAIENAFQAGITTVVASGNDGRDASQNTPASSPNAITVGALRWENTRPGFSNYGKVVDLFAPGELIRSGWTGGNNATRVASGTSAASPHVAGLVAYLMSIETLSSPSEVTARVLNLTIPGLVKDARGSPNKVAYNGIQEML.

The N-terminal stretch at 1–17 is a signal peptide; the sequence is MQLLNLSLFFLLPFATA. Positions 18–115 are excised as a propeptide; the sequence is NPIPQDSQNI…VLPDQKIYLA (98 aa). The Inhibitor I9 domain occupies 31-114; it reads QYIVTLKDGL…SVLPDQKIYL (84 aa). In terms of domain architecture, Peptidase S8 spans 124 to 407; it reads GWNLGYMSSK…VAYNGIQEML (284 aa). N-linked (GlcNAc...) asparagine glycosylation is present at asparagine 145. Catalysis depends on charge relay system residues aspartate 162 and histidine 194. Residues asparagine 241, asparagine 254, and asparagine 341 are each glycosylated (N-linked (GlcNAc...) asparagine). The active-site Charge relay system is serine 350. N-linked (GlcNAc...) asparagine glycosylation is present at asparagine 381.

It belongs to the peptidase S8 family.

It is found in the secreted. Its function is as follows. Secreted subtilisin-like serine protease with keratinolytic activity that contributes to pathogenicity. This chain is Subtilisin-like protease CPC735_013710, found in Coccidioides posadasii (strain C735) (Valley fever fungus).